The chain runs to 531 residues: MACLLSAAQRASAGVLFVALWGTVLGDRLLVVPQDGSHWLSMQDIVEALGARGHEIVVLVPEVNLLLRESRFYTRRIYPVPFDQEEQSYRYRTFGEKHFTDRSWLSGPQTEYRNNMVVIDMYFINCQSLLRHGDTLDFLRAGKFDALFTDPALPCGVILAEYLGLPSVYLFRGFPCSLEHGFGGSPNPVSYIPRCYTKFSDQMSFPQRVVNFLVNLLEVPLFYCLYSKYEDLAVELLKREVDLPTLFQKDPVWLLRYDFVFEYPRPVMPNMVLIGGINCKKPDVLSQEFEAYVNASGEHGIVVFSLGSMVSEIPEKKAMEIADALGKIPQTVLWRYTGSRPSNLAKNTYLVKWLPQNVLLGHPKTRAFITHSGSHGIYEGICNGVPMVMLPLFGDQMDNAKRIETRGAGVTLNVLEMTSDDLANALKTVINDKSYKENIMRLSSLHKDRPVEPLDLAVFWVEFVMRHKGAAPRPAAHDLTWYQYHSLDVIGFLLAIVLTVAFVTFKCCAFAWGKCFGKKGRVKKAHKSKVH.

Residues 1 to 26 form the signal peptide; it reads MACLLSAAQRASAGVLFVALWGTVLG. Residue Asn-294 is glycosylated (N-linked (GlcNAc...) asparagine). The helical transmembrane segment at 489-505 threads the bilayer; that stretch reads VIGFLLAIVLTVAFVTF.

It belongs to the UDP-glycosyltransferase family.

The protein localises to the microsome. It is found in the endoplasmic reticulum membrane. The enzyme catalyses glucuronate acceptor + UDP-alpha-D-glucuronate = acceptor beta-D-glucuronoside + UDP + H(+). It catalyses the reaction (5Z,8Z,11Z,14Z)-eicosatetraenoate + UDP-alpha-D-glucuronate = O-[(5Z),(8Z),(11Z),(14Z)-eicosatetraenoyl]-beta-D-glucuronate + UDP. The catalysed reaction is 15-hydroxy-(5Z,8Z,11Z,13E)-eicosatetraenoate + UDP-alpha-D-glucuronate = 15-O-(beta-D-glucuronosyl)-(5Z,8Z,11Z,14Z)-eicosatetraenoate + UDP + H(+). It carries out the reaction (E)-ferulate + UDP-alpha-D-glucuronate = (E)-4-O-(beta-D-glucuronosyl)-ferulate + UDP + H(+). The enzyme catalyses (E)-ferulate + UDP-alpha-D-glucuronate = (E)-ferulic acid beta-D-glucuronate ester + UDP. Functionally, UDP-glucuronosyltransferase (UGT) that catalyzes phase II biotransformation reactions in which lipophilic substrates are conjugated with glucuronic acid to facilitate their inactivation and excretion from the body. Essential for the elimination and detoxification of drugs, xenobiotics and endogenous compounds. Involved in the glucuronidation of arachidonic acid (AA) and AA-derived eicosanoids including 15-HETE and 20-HETE. Conjugates small planar phenolic molecules such as 4-nitrophenol, 1-naphthol, and 4-methylumbelliferone. The bulky phenol 4-hydroxybiphenyl, androgens and estrogens are not substrates. 2-hydroxybiphenyl is an excellent substrate. Involved in the glucuronidation of the phytochemical ferulic acid at the phenolic or the carboxylic acid group. In Oryctolagus cuniculus (Rabbit), this protein is UDP-glucuronosyltransferase 1A6 (UGT1).